The following is a 127-amino-acid chain: Glycine cleavage system H protein (127 aa).

The 82-residue stretch at 24-105 (AALVGITDFA…YGEGWLVKIR (82 aa)) folds into the Lipoyl-binding domain. The residue at position 65 (K65) is an N6-lipoyllysine.

Belongs to the GcvH family. As to quaternary structure, the glycine cleavage system is composed of four proteins: P, T, L and H. Requires (R)-lipoate as cofactor.

In terms of biological role, the glycine cleavage system catalyzes the degradation of glycine. The H protein shuttles the methylamine group of glycine from the P protein to the T protein. The polypeptide is Glycine cleavage system H protein (Chlorobium limicola (strain DSM 245 / NBRC 103803 / 6330)).